Consider the following 224-residue polypeptide: Synaptogyrin-2 (224 aa).

At M1 the chain carries N-acetylmethionine. A Phosphoserine modification is found at S3. The MARVEL domain maps to 20–171 (FLKQPQVVVR…LAFLAYQRYK (152 aa)). 4 helical membrane-spanning segments follow: residues 26 to 46 (VVVR…IFGE), 73 to 93 (AIGV…IYFP), 105 to 125 (VIGD…GFCF), and 147 to 167 (AAIT…FLAY). The tract at residues 196 to 224 (PGVPADTYQQPPFTQNAESTEGYQPPPVY) is disordered. Over residues 202 to 217 (TYQQPPFTQNAESTEG) the composition is skewed to polar residues.

The protein belongs to the synaptogyrin family. In terms of processing, may be tyrosine phosphorylated by Src.

Its subcellular location is the cytoplasmic vesicle membrane. The protein localises to the cytoplasmic vesicle. It is found in the secretory vesicle. It localises to the synaptic vesicle membrane. May play a role in regulated exocytosis. In neuronal cells, modulates the localization of synaptophysin/SYP into synaptic-like microvesicles and may therefore play a role in the formation and/or the maturation of this vesicles. May also play a role in GLUT4 storage and transport to the plasma membrane. In Bos taurus (Bovine), this protein is Synaptogyrin-2.